Here is a 218-residue protein sequence, read N- to C-terminus: Ras-related protein Rab-11B (218 aa).

G2 is modified (N-acetylglycine). R4 carries the post-translational modification Citrulline. GTP contacts are provided by S20, G21, G23, K24, S25, N26, N37, L38, S40, S42, and T43. Residue S25 participates in Mg(2+) binding. The Switch 1 signature appears at 36–47; the sequence is FNLESKSTIGVE. The Mg(2+) site is built by T43 and D66. The Switch 2 signature appears at 67–86; that stretch reads TAGQERYRAITSAYYRGAVG. 6 residues coordinate GTP: G69, N124, K125, D127, A155, and L156. The segment at 184 to 218 is disordered; it reads RAAHDESPGNNVVDISVPPTTDGQKPNKLQCCQNL. S-geranylgeranyl cysteine attachment occurs at residues C214 and C215. Residue C215 is modified to Cysteine methyl ester. A propeptide spans 216–218 (removed in mature form); it reads QNL.

The protein belongs to the small GTPase superfamily. Rab family. In terms of assembly, interacts with KCNMA1. Interacts with RAB11FIP1, RAB11FIP2, RAB11FIP3 and RAB11FIP4. May interact with TBC1D14. Interacts with ATP6V1E1. Interacts with PI4KB. Interacts (GDP-bound form) with ZFYVE27. Interacts (GDP-bound form) with KIF5A in a ZFYVE27-dependent manner. Interacts with RELCH. Interacts (in GTP-bound form) with TBC1D8B (via domain Rab-GAP TBC). Forms a complex containing RAB11B, ASAP1, Rabin8/RAB3IP, RAP11FIP3 and ARF4. Interacts with WDR44. Mg(2+) serves as cofactor. Post-translationally, citrullinated by PADI4. In terms of processing, (Microbial infection) Glycosylated on arginine residues by S.typhimurium protein Ssek3.

The protein resides in the recycling endosome membrane. The protein localises to the cytoplasmic vesicle. It is found in the secretory vesicle. Its subcellular location is the synaptic vesicle membrane. It localises to the phagosome membrane. It catalyses the reaction GTP + H2O = GDP + phosphate + H(+). With respect to regulation, regulated by guanine nucleotide exchange factors (GEFs) which promote the exchange of bound GDP for free GTP. Regulated by GTPase activating proteins (GAPs) which increase the GTP hydrolysis activity. Inhibited by GDP dissociation inhibitors (GDIs) which prevent Rab-GDP dissociation. In terms of biological role, the small GTPases Rab are key regulators of intracellular membrane trafficking, from the formation of transport vesicles to their fusion with membranes. Rabs cycle between an inactive GDP-bound form and an active GTP-bound form that is able to recruit to membranes different set of downstream effectors directly responsible for vesicle formation, movement, tethering and fusion. The small Rab GTPase RAB11B plays a role in endocytic recycling, regulating apical recycling of several transmembrane proteins including cystic fibrosis transmembrane conductance regulator/CFTR, epithelial sodium channel/ENaC, potassium voltage-gated channel, and voltage-dependent L-type calcium channel. May also regulate constitutive and regulated secretion, like insulin granule exocytosis. Required for melanosome transport and release from melanocytes. Also regulates V-ATPase intracellular transport in response to extracellular acidosis. Promotes Rabin8/RAB3IP preciliary vesicular trafficking to mother centriole by forming a ciliary targeting complex containing Rab11, ASAP1, Rabin8/RAB3IP, RAB11FIP3 and ARF4, thereby regulating ciliogenesis initiation. On the contrary, upon LPAR1 receptor signaling pathway activation, interaction with phosphorylated WDR44 prevents Rab11-RAB3IP-RAB11FIP3 complex formation and cilia growth. The chain is Ras-related protein Rab-11B from Homo sapiens (Human).